The primary structure comprises 414 residues: Protein FAM81B (414 aa).

Residues 1–13 (MTSETDINKSASP) are compositionally biased toward polar residues. The interval 1 to 43 (MTSETDINKSASPTAAAKEQPEEPDGPLPGSASEQEKKVRFSP) is disordered. Coiled-coil stretches lie at residues 70 to 94 (NTQR…LEQA), 121 to 149 (LLEN…QIKA), 188 to 223 (KLSG…NLDT), and 266 to 414 (LNLY…LQES).

This sequence belongs to the FAM81 family.

This chain is Protein FAM81B (FAM81B), found in Bos taurus (Bovine).